We begin with the raw amino-acid sequence, 399 residues long: Cell division protein DivIB (399 aa).

2 disordered regions span residues 1-23 (MSKDKKNEDKETLEELKELSEWQ) and 35-119 (EEEA…ATKE). Residues 1 to 133 (MSKDKKNEDK…AKIPGIHILR (133 aa)) lie on the Cytoplasmic side of the membrane. 2 stretches are compositionally biased toward basic and acidic residues: residues 35-65 (EEEAALAEEKEKERQARMGEESEKSEDKQDQ) and 75-119 (ESAK…ATKE). The chain crosses the membrane as a helical span at residues 134–154 (AFTILFPSLLLLFVSAYLLSP). Residues 155–399 (YATMKDIRVE…NQTTQRSSRR (245 aa)) are Extracellular-facing. Residues 156 to 226 (ATMKDIRVEG…TKFTIKVKEY (71 aa)) enclose the POTRA domain. Residues 364–388 (KAKQEAKEAEKKQEEEQKKQEEESN) are compositionally biased toward basic and acidic residues. The segment at 364–399 (KAKQEAKEAEKKQEEEQKKQEEESNRNQTTQRSSRR) is disordered. Residues 389–399 (RNQTTQRSSRR) are compositionally biased toward polar residues.

It belongs to the FtsQ/DivIB family. DivIB subfamily.

Its subcellular location is the cell membrane. Cell division protein that may be involved in stabilizing or promoting the assembly of the division complex. The polypeptide is Cell division protein DivIB (Streptococcus pneumoniae serotype 4 (strain ATCC BAA-334 / TIGR4)).